The primary structure comprises 85 residues: UPF0386 protein Arad_1912 (85 aa).

Belongs to the UPF0386 family.

This is UPF0386 protein Arad_1912 from Rhizobium rhizogenes (strain K84 / ATCC BAA-868) (Agrobacterium radiobacter).